The primary structure comprises 64 residues: Alpha-mammal toxin Lqq5 (64 aa).

An LCN-type CS-alpha/beta domain is found at lysine 2–asparagine 64. Intrachain disulfides connect cysteine 12–cysteine 63, cysteine 16–cysteine 36, cysteine 22–cysteine 46, and cysteine 26–cysteine 48. Asparagine amide is present on asparagine 64.

Belongs to the long (4 C-C) scorpion toxin superfamily. Sodium channel inhibitor family. Alpha subfamily. Expressed by the venom gland.

Its subcellular location is the secreted. Its function is as follows. Alpha toxins bind voltage-independently at site-3 of sodium channels (Nav) and inhibit the inactivation of the activated channels, thereby blocking neuronal transmission. Is active on mammals and bind with high affinity to rat brain synaptosome. Does not display phospholipid-binding activity. This chain is Alpha-mammal toxin Lqq5, found in Leiurus quinquestriatus quinquestriatus (Egyptian scorpion).